The primary structure comprises 420 residues: Heterogeneous nuclear ribonucleoprotein D-like (420 aa).

Disordered regions lie at residues 1–83 and 96–120; these read MEVP…RRRP and QRSAAAAAATRTARQHPPADSSVTM. An Omega-N-methylarginine modification is found at R25. A compositionally biased stretch (low complexity) spans 36–52; that stretch reads RQLAPLLPSLAPSSARQ. 2 consecutive RRM domains span residues 148–230 and 233–312; these read GKMF…KGKE and KKVF…QPKE. K161 carries the N6-methyllysine modification. K209 participates in a covalent cross-link: Glycyl lysine isopeptide (Lys-Gly) (interchain with G-Cter in SUMO2). K216 is subject to N6-acetyllysine. The residue at position 241 (S241) is a Phosphoserine. Disordered stretches follow at residues 313–348 and 398–420; these read VYRQQQQQQKGGRGAAAGGRGGTRGRGRGQGQNWNQ and GQQSTYGKASRGGGNHQNNYQPY. A compositionally biased stretch (gly residues) spans 323 to 342; sequence GGRGAAAGGRGGTRGRGRGQ. A necessary for interaction with TNPO1 region spans residues 342–420; the sequence is QGQNWNQGFN…GNHQNNYQPY (79 aa). A necessary for its nuclear import and export region spans residues 396-420; the sequence is YSGQQSTYGKASRGGGNHQNNYQPY. Dimethylated arginine; alternate is present on R408. R408 is subject to Omega-N-methylarginine; alternate.

In terms of assembly, interacts with ZNF148. Interacts with TNPO1. Dimethylation of Arg-408 is probably of the asymmetric type. In terms of tissue distribution, expressed in heart, brain, placenta, lung, liver, skeletal muscle, kidney, pancreas, spleen, thymus, prostate, testis, ovary, small intestine, colon and leukocytes. Expressed in myeloid leukemia, gastric adenocarcinoma, cervical carcinoma, hepatoma, fibrosarcoma, colon adenocarcinoma, epidermoid carcinoma, osteosarcoma and urinary bladder carcinoma cells.

It localises to the nucleus. It is found in the cytoplasm. Functionally, acts as a transcriptional regulator. Promotes transcription repression. Promotes transcription activation in differentiated myotubes. Binds to double- and single-stranded DNA sequences. Binds to the transcription suppressor CATR sequence of the COX5B promoter. Binds with high affinity to RNA molecules that contain AU-rich elements (AREs) found within the 3'-UTR of many proto-oncogenes and cytokine mRNAs. Binds both to nuclear and cytoplasmic poly(A) mRNAs. Binds to poly(G) and poly(A), but not to poly(U) or poly(C) RNA homopolymers. Binds to the 5'-ACUAGC-3' RNA consensus sequence. The chain is Heterogeneous nuclear ribonucleoprotein D-like (HNRNPDL) from Homo sapiens (Human).